The sequence spans 1979 residues: Repetitive organellar protein (1979 aa).

Residues 1–12 (MVFTFKNKKKKK) are compositionally biased toward basic residues. Disordered regions lie at residues 1-42 (MVFT…DSWY) and 54-116 (TKYK…NNYS). 2 stretches are compositionally biased toward basic and acidic residues: residues 13-24 (EASSDKVSKESF) and 31-42 (NNEKREKSDSWY). The span at 68–114 (EDIINNNNNNNNDNNNDNNNDNNNDNNNDNNNDNNNENNNDNNNFNN) shows a compositional bias: low complexity. Coiled coils occupy residues 127-366 (DNEL…LKDE), 412-666 (LKVY…EMEL), 693-876 (LKES…KKKQ), 992-1094 (KKKH…YKTI), 1126-1307 (VDKI…MNIK), and 1398-1467 (IANY…LTSQ).

Its subcellular location is the host cell membrane. This chain is Repetitive organellar protein, found in Plasmodium falciparum (isolate 3D7).